We begin with the raw amino-acid sequence, 441 residues long: GVGFKAGVKDYRLTYYTPEYKTKDTDILAAFRMTPQPGVPAEEAGAAVAAESSTGTWTTVWTDGLTSLDRYKGRCYDIEPVAGEENQYIAYVAYPLDLFEEGSVTNMLTSIVGNVFGFKALRALXXEDLRIPPAYSKTFMGPPHGIQVERDKLNKYGRPLLGCTIKPKLGLSAKNYGRAVYECLRGGLDFTKDDENVNSQPFMRWRDRFLFVAEALFKSQAETGEIKGHYLNATAGTCEEMLKRAVFARELGVPIVMHDYLTGGFTANTSLAFYCRDNGLLLHIHRAMHAVIDRQKNHGMHFRVLAKALRMSGGDHIHAGTVVGKLEGEREVTLGFVDLLRDDYIEKDRSRGIYFTQDWVSMPGVFPVASGGIHVWHMPALTEIFGDDSVLQFGGGTLGHPWGNAPGAVANRVALEACVQARNEGRDLAREGNEIIREACK.

Residue lysine 5 is modified to N6,N6,N6-trimethyllysine. Substrate-binding residues include asparagine 114 and threonine 164. Lysine 166 functions as the Proton acceptor in the catalytic mechanism. Lysine 168 serves as a coordination point for substrate. The Mg(2+) site is built by lysine 192, aspartate 194, and glutamate 195. Lysine 192 is modified (N6-carboxylysine). The active-site Proton acceptor is histidine 285. Substrate contacts are provided by arginine 286, histidine 318, and serine 370.

The protein belongs to the RuBisCO large chain family. Type I subfamily. In terms of assembly, heterohexadecamer of 8 large chains and 8 small chains; disulfide-linked. The disulfide link is formed within the large subunit homodimers. It depends on Mg(2+) as a cofactor. The disulfide bond which can form in the large chain dimeric partners within the hexadecamer appears to be associated with oxidative stress and protein turnover.

The protein localises to the plastid. The protein resides in the chloroplast. It carries out the reaction 2 (2R)-3-phosphoglycerate + 2 H(+) = D-ribulose 1,5-bisphosphate + CO2 + H2O. The catalysed reaction is D-ribulose 1,5-bisphosphate + O2 = 2-phosphoglycolate + (2R)-3-phosphoglycerate + 2 H(+). Functionally, ruBisCO catalyzes two reactions: the carboxylation of D-ribulose 1,5-bisphosphate, the primary event in carbon dioxide fixation, as well as the oxidative fragmentation of the pentose substrate in the photorespiration process. Both reactions occur simultaneously and in competition at the same active site. This Pellaea andromedifolia (Coffee fern) protein is Ribulose bisphosphate carboxylase large chain.